Reading from the N-terminus, the 124-residue chain is Fluoride-specific ion channel FluC (124 aa).

A run of 4 helical transmembrane segments spans residues 4 to 24 (ILAIAVFGAVGCVARYLLAGG), 32 to 52 (AFPWGTLAVNVIGAFLIGLIM), 68 to 88 (GLTIGFLGGFTTFSTFSYETF), and 101 to 121 (LNVLASVALCLVGTWAGIMAA). Positions 75 and 78 each coordinate Na(+).

This sequence belongs to the fluoride channel Fluc/FEX (TC 1.A.43) family.

Its subcellular location is the cell inner membrane. The enzyme catalyses fluoride(in) = fluoride(out). Its activity is regulated as follows. Na(+) is not transported, but it plays an essential structural role and its presence is essential for fluoride channel function. Its function is as follows. Fluoride-specific ion channel. Important for reducing fluoride concentration in the cell, thus reducing its toxicity. The polypeptide is Fluoride-specific ion channel FluC (Geobacter sulfurreducens (strain ATCC 51573 / DSM 12127 / PCA)).